Reading from the N-terminus, the 326-residue chain is Vitamin B12 import system permease protein BtuC (326 aa).

A run of 9 helical transmembrane segments spans residues 15 to 35, 61 to 81, 88 to 108, 112 to 132, 146 to 166, 184 to 204, 240 to 260, 274 to 294, and 302 to 322; these read WLLS…CAGE, LAVL…QALF, PGLL…VLLG, LPGW…TLIL, LLAG…AIYF, GGVD…LIWI, GWMV…GLVI, VLLP…DVVA, and ELPI…WLLL.

This sequence belongs to the binding-protein-dependent transport system permease family. FecCD subfamily. In terms of assembly, the complex is composed of two ATP-binding proteins (BtuD), two transmembrane proteins (BtuC) and a solute-binding protein (BtuF).

The protein resides in the cell inner membrane. In terms of biological role, part of the ABC transporter complex BtuCDF involved in vitamin B12 import. Involved in the translocation of the substrate across the membrane. This is Vitamin B12 import system permease protein BtuC from Salmonella agona (strain SL483).